A 182-amino-acid polypeptide reads, in one-letter code: Dihydrofolate reductase (182 aa).

The DHFR domain occupies 3–180 (RFNLIVAVCE…IKFEYKILEK (178 aa)). NADP(+)-binding positions include A9 and 15–21 (GIGIRGD). 29–34 (ELKYFS) contributes to the substrate binding site. 53-55 (RKT) contributes to the NADP(+) binding site. R69 provides a ligand contact to substrate. NADP(+)-binding positions include 75-77 (STT) and 113-120 (GGSGVYEE).

The protein belongs to the dihydrofolate reductase family. In terms of assembly, monomer. Interacts with vg.

The enzyme catalyses (6S)-5,6,7,8-tetrahydrofolate + NADP(+) = 7,8-dihydrofolate + NADPH + H(+). It functions in the pathway cofactor biosynthesis; tetrahydrofolate biosynthesis; 5,6,7,8-tetrahydrofolate from 7,8-dihydrofolate: step 1/1. In terms of biological role, by interacting with vestigial (vg), may control genes involved in DNA replication. Its function is as follows. Key enzyme in folate metabolism. Catalyzes an essential reaction for de novo glycine and purine synthesis, and for DNA precursor synthesis. The protein is Dihydrofolate reductase (Dhfr) of Drosophila melanogaster (Fruit fly).